Here is a 213-residue protein sequence, read N- to C-terminus: G2/mitotic-specific cyclin-1 (213 aa).

The tract at residues 1–23 is disordered; it reads MKFSEEKNVSNNPTNFEGGLDSR.

Belongs to the cyclin family. Cyclin AB subfamily. In terms of assembly, interacts with the CDC2 protein kinase to form a serine/threonine kinase holoenzyme complex also known as maturation promoting factor (MPF). The cyclin subunit imparts substrate specificity to the complex. Only expressed in organs with dividing cells.

Its function is as follows. Essential for the control of the cell cycle at the G2/M (mitosis) transition. This chain is G2/mitotic-specific cyclin-1, found in Medicago sativa (Alfalfa).